The chain runs to 130 residues: Protein LLP homolog (130 aa).

The span at M1–N21 shows a compositional bias: basic residues. 2 disordered regions span residues M1–P23 and Q57–D76. Residues K10–K78 are a coiled coil. Residue K78 forms a Glycyl lysine isopeptide (Lys-Gly) (interchain with G-Cter in SUMO2) linkage. Residues R104–A124 show a composition bias toward basic residues. Residues R104–W130 form a disordered region.

This sequence belongs to the learning-associated protein family. In terms of assembly, interacts with CTCF, MYO1C and with the transcriptional machinery, including RNA polymerase II and TBP. In terms of tissue distribution, widely expressed, with high levels in testis and spleen and low levels in heart. In the brain, expressed in the cortex and hippocampus, and at very low levels in the cerebellum.

Its subcellular location is the nucleus. The protein localises to the nucleolus. The protein resides in the chromosome. Functionally, in hippocampal neurons, regulates dendritic and spine growth and synaptic transmission. This is Protein LLP homolog (Llph) from Mus musculus (Mouse).